We begin with the raw amino-acid sequence, 582 residues long: Zinc finger protein 319 (582 aa).

Residues 1 to 14 (MSESWQQPPQTQPQ) show a composition bias toward low complexity. A disordered region spans residues 1-39 (MSESWQQPPQTQPQQPQPPQPQHHAEPPPALAEHTLPPG). The segment at 76-100 (PKCGVCGHDLAHLSSPHEHQCLAGH) adopts a C2H2-type 1 zinc-finger fold. The C2H2-type 2; degenerate zinc finger occupies 104–126 (FQCTQCLKIFHQATDLLEHQCVQ). Residue K130 forms a Glycyl lysine isopeptide (Lys-Gly) (interchain with G-Cter in SUMO2) linkage. The C2H2-type 3 zinc finger occupies 132 to 154 (FVCGVCKMGFSLLTSLAQHHSSH). The span at 174–196 (EPATTAAPSLPAAPAPSTVTPAE) shows a compositional bias: low complexity. The interval 174 to 198 (EPATTAAPSLPAAPAPSTVTPAEQA) is disordered. 3 consecutive C2H2-type zinc fingers follow at residues 202–224 (YSCPICQKPFKHLSELSRHERIH), 230–252 (YKCTLCDKSFSQSSHLVHHKRTH), and 258–280 (YKCAVCEKTFKHRSHLVRHMYAH). S281 is subject to Phosphoserine. A C2H2-type 7; degenerate zinc finger spans residues 287 to 309 (FRCNVCELHFKESSELLQHPCTP). C2H2-type zinc fingers lie at residues 315–337 (FRCGECQKAFKRPSDLRQHERTH), 343–365 (FKCDLCPMGFKQQYALMRHRRTH), and 371–393 (FKCGLCEKGFGQPSHLLYHQHVH). Residues 399–421 (FKCPVCQKGFDQSAELLRHKCLP) form a C2H2-type 11; degenerate zinc finger. The C2H2-type 12 zinc-finger motif lies at 428 to 450 (FKCPVCNKAYKRASALQKHQLAH). The C2H2-type 13; degenerate zinc-finger motif lies at 458 to 480 (LRCTLCERRFFSSSEFVQHRCDP). 3 C2H2-type zinc fingers span residues 486-508 (LKCPDCEKRFKYASDLQRHRRVH), 514-536 (YKCPNCDKAFKQREHLNKHQGVH), and 542-564 (FKCVWCGERFLDVALLQEHSAQH).

It belongs to the krueppel C2H2-type zinc-finger protein family.

The protein localises to the nucleus. Its function is as follows. May be involved in transcriptional regulation. The protein is Zinc finger protein 319 (ZNF319) of Homo sapiens (Human).